A 267-amino-acid chain; its full sequence is Ribosomal RNA small subunit methyltransferase NEP1 (267 aa).

Positions 1 to 46 are disordered; the sequence is MSELKNGTTEPKKNETTQSDSKSKSTSTNKSSVPPASLVPVQPTAL. Residues 16–32 are compositionally biased toward low complexity; sequence TTQSDSKSKSTSTNKSS. S-adenosyl-L-methionine is bound by residues L195, G222, 227-229, and 242-247; these read GKD and LSDYPL.

It belongs to the class IV-like SAM-binding methyltransferase superfamily. RNA methyltransferase NEP1 family. In terms of assembly, homodimer.

It is found in the nucleus. The protein resides in the nucleolus. It catalyses the reaction a pseudouridine in rRNA + S-adenosyl-L-methionine = an N(1)-methylpseudouridine in rRNA + S-adenosyl-L-homocysteine + H(+). Functionally, S-adenosyl-L-methionine-dependent pseudouridine N(1)-methyltransferase that methylates the pseudouridine corresponding to position 1189 (Psi1189) in S.cerevisiae 18S rRNA. Involved the biosynthesis of the hypermodified N1-methyl-N3-(3-amino-3-carboxypropyl) pseudouridine (m1acp3-Psi) conserved in eukaryotic 18S rRNA. Also has an essential role in 40S ribosomal subunit biogenesis independent on its methyltransferase activity, facilitating the incorporation of ribosomal protein S19 during the formation of pre-ribosomes. The sequence is that of Ribosomal RNA small subunit methyltransferase NEP1 from Candida albicans (Yeast).